The sequence spans 66 residues: UPF0337 protein SAG0619 (66 aa).

The tract at residues 1-22 (MSQEKLKSKLDQAKGGAKEGFG) is disordered.

It belongs to the UPF0337 (CsbD) family.

The protein is UPF0337 protein SAG0619 of Streptococcus agalactiae serotype V (strain ATCC BAA-611 / 2603 V/R).